The following is a 530-amino-acid chain: Histone-arginine methyltransferase CARMER (530 aa).

Positions 141-450 constitute an SAM-dependent MTase PRMT-type domain; sequence ASQYFQFYGY…QSYDVTIDLH (310 aa). Residues glutamine 154, arginine 163, glycine 187, glutamate 209, glutamate 238, and threonine 266 each contribute to the S-adenosyl-L-methionine site. The residue at position 501 (arginine 501) is an Asymmetric dimethylarginine; by autocatalysis.

This sequence belongs to the class I-like SAM-binding methyltransferase superfamily. Protein arginine N-methyltransferase family. Homodimer. The dimethylated protein is the major form.

The protein resides in the cytoplasm. It is found in the nucleus. It catalyses the reaction L-arginyl-[protein] + 2 S-adenosyl-L-methionine = N(omega),N(omega)-dimethyl-L-arginyl-[protein] + 2 S-adenosyl-L-homocysteine + 2 H(+). Its function is as follows. Methylates (mono- and asymmetric dimethylation) the guanidino nitrogens of arginyl residues in proteins. May methylate histone H3 at 'Arg-17' and activate transcription via chromatin remodeling. The sequence is that of Histone-arginine methyltransferase CARMER (Art4) from Drosophila simulans (Fruit fly).